The sequence spans 73 residues: Mu-sparatoxin-Hv2 (73 aa).

The signal sequence occupies residues 1 to 20 (MKFAIVITLLLVAFSAVALA). Positions 21 to 35 (DKSIERAVMDLITAR) are excised as a propeptide. Disulfide bonds link Cys39-Cys53, Cys46-Cys58, and Cys52-Cys68. Residue Phe72 is modified to Phenylalanine amide.

Belongs to the neurotoxin 10 (Hwtx-1) family. In terms of tissue distribution, expressed by the venom gland.

The protein resides in the secreted. In terms of biological role, insecticidal toxin that potently and irreversibly blocks voltage-gated sodium channels (Nav) in cockroach dorsal unpaired median (DUM) neurons (IC(50)=833.7 nM). It does not change both the steady-state activation and inactivation curves, suggesting it acts as a pore blocker (possibly at Nav site 1). Does not show toxicity when intraperitoneally injected into mouse. This is Mu-sparatoxin-Hv2 from Heteropoda venatoria (Brown huntsman spider).